The chain runs to 389 residues: Vacuolar protein sorting-associated protein vts1 (389 aa).

Residues N149–P335 form a disordered region. Composition is skewed to polar residues over residues T156–T177, T184–P219, and S227–K282. Low complexity predominate over residues T294–S306. Residues A308–S334 show a composition bias toward polar residues.

It belongs to the VTA1 family. In terms of assembly, homodimer (in cytoplasm).

The protein localises to the cytoplasm. It localises to the endosome membrane. In terms of biological role, has a role in the formation of the multivesicular body (MVB). Required for the sorting of lipids to form intralumenal vesicles and for fluid-phase transport to the vacuole. Required for sorting several plasma membrane proteins into the MVB. This Schizosaccharomyces pombe (strain 972 / ATCC 24843) (Fission yeast) protein is Vacuolar protein sorting-associated protein vts1 (vts1).